The chain runs to 106 residues: Guanylate cyclase activator 2B (106 aa).

The signal sequence occupies residues 1-21; that stretch reads MSRSQLWAAVVLLLLLQSAQG. The propeptide occupies 22–91; the sequence is VYIKYHGFQV…STFKALRTIA (70 aa). Cystine bridges form between C62–C75, C95–C103, and C98–C106.

This sequence belongs to the guanylin family. In terms of tissue distribution, localized predominantly in intestinal villi and the corticomedullary junction of the kidney.

Its subcellular location is the secreted. Its function is as follows. Endogenous activator of intestinal guanylate cyclase. It stimulates this enzyme through the same receptor binding region as the heat-stable enterotoxins. May be a potent physiological regulator of intestinal fluid and electrolyte transport. May be an autocrine/paracrine regulator of intestinal salt and water transport. The sequence is that of Guanylate cyclase activator 2B (Guca2b) from Mus musculus (Mouse).